Consider the following 96-residue polypeptide: Pore-forming peptide amoebapore B (96 aa).

The signal sequence occupies residues 1–19 (MRAIIFVLIFAIAFAATRE). Residues 20–96 (GAILCNLCKD…VVVCEKIHAC (77 aa)) form the Saposin B-type domain. Intrachain disulfides connect C24–C96, C27–C90, and C54–C65.

In terms of assembly, monomer. Homodimer. Hexamer; formed during insertion in the membrane.

The protein resides in the cytoplasmic granule. Its function is as follows. Forms pores in the cell membrane of host cells. Has antibacterial activity against M.luteus, no activity against E.coli. Implicated in the cytolytic activity of the parasite. The polypeptide is Pore-forming peptide amoebapore B (Entamoeba histolytica (strain ATCC 30459 / HM-1:IMSS / ABRM)).